Reading from the N-terminus, the 482-residue chain is ATP synthase subunit beta (482 aa).

An ATP-binding site is contributed by 162 to 169 (GGAGVGKT).

This sequence belongs to the ATPase alpha/beta chains family. F-type ATPases have 2 components, CF(1) - the catalytic core - and CF(0) - the membrane proton channel. CF(1) has five subunits: alpha(3), beta(3), gamma(1), delta(1), epsilon(1). CF(0) has four main subunits: a(1), b(1), b'(1) and c(9-12).

The protein localises to the cellular thylakoid membrane. It catalyses the reaction ATP + H2O + 4 H(+)(in) = ADP + phosphate + 5 H(+)(out). Its function is as follows. Produces ATP from ADP in the presence of a proton gradient across the membrane. The catalytic sites are hosted primarily by the beta subunits. This Nostoc sp. (strain PCC 7120 / SAG 25.82 / UTEX 2576) protein is ATP synthase subunit beta.